The sequence spans 97 residues: DNA replication protein 1 (97 aa).

Positions 49–78 (IELEKKMTKLEHENKLMKNALYELSRMENN) form a coiled coil.

The protein belongs to the phi29likevirus DNA replication protein 1 family. Homomultimer. Self-associates into large complexes forming long filamentous structures. Interacts (via N-terminus) with the primer terminal protein.

Its subcellular location is the host membrane. Functionally, protein that assembles into highly ordered structures and provides a specific site for viral DNA replication. Probably anchors the viral DNA replisome to the host membrane. This Bacillus subtilis (Bacteriophage PZA) protein is DNA replication protein 1 (1C).